The sequence spans 161 residues: tRNA-acetylating toxin 1 (161 aa).

Positions 92, 94, 99, 100, 102, 104, 105, 132, and 135 each coordinate acetyl-CoA. Tyr-140 is a catalytic residue. An acetyl-CoA-binding site is contributed by His-142.

Belongs to the acetyltransferase family. GNAT subfamily. Homodimer (in absence of antitoxin). Forms a complex with cognate antitoxin TacA1. Forms a 4:2 antitoxin:toxin complex with cognate antitoxin TacA1.

It carries out the reaction glycyl-tRNA(Gly) + acetyl-CoA = N-acetylglycyl-tRNA(Gly) + CoA + H(+). Its function is as follows. Toxic component of a type II toxin-antitoxin (TA) system. Acetylates tRNA and inhibits translation, does not acetylate uncharged tRNA. Upon expression in situ acetylates only Gly-tRNA(Gly). In vitro acetylates mainly Gly and Ile/Leu. Upon induction of the toxin gene in lag phase in rich medium (but not mid-exponential phase) the lag phase is extended by several hours, locking bacteria in a non-growth state. Neutralized only by cognate antitoxin TacA1 (A8), but not by TacA2 or TacA3. Its toxic effect is neutralized by expression of peptidyl-tRNA hydrolase (pth) in lag phase. NAD-dependent protein deacylase (cobB) also play a role in detoxifying TacT targets. Expression increases persister cell formation, which is also abolished by either cognate antitoxin or Pth expression. Plays a role in persister cell formation. Functionally, the TacA1-TacT1 complex binds (and probably represses) its own promoter DNA but not that of tacA3-tacT3, it does not repress the tacA3-tacT3 promoter. This is tRNA-acetylating toxin 1 from Salmonella typhimurium (strain 14028s / SGSC 2262).